We begin with the raw amino-acid sequence, 212 residues long: MSDYRAEFVEFAVASQVLCFGEFKTKAGRLSPYFFNAGLFNDGEKLKRLGEFYAKAIVDSGIAFDVMFGPAYKGIPLAASIVIALAGMGRNVPFAFNRKEAKDHGEGGTVVGAPLQGRVLIVDDVISAGTSVRESVDLIRASDATPAGVVIALDRMERGQGDKSAVQEVREQYDIPVVAVVTLDNLVEFLERDANRRTELQAVANYRENYGV.

5-phospho-alpha-D-ribose 1-diphosphate is bound at residue lysine 26. Residue 34–35 (FF) participates in orotate binding. Residues 72–73 (YK), arginine 98, lysine 99, lysine 102, histidine 104, and 123–131 (DDVISAGTS) each bind 5-phospho-alpha-D-ribose 1-diphosphate. Positions 127 and 155 each coordinate orotate.

It belongs to the purine/pyrimidine phosphoribosyltransferase family. PyrE subfamily. In terms of assembly, homodimer. Mg(2+) is required as a cofactor.

It carries out the reaction orotidine 5'-phosphate + diphosphate = orotate + 5-phospho-alpha-D-ribose 1-diphosphate. The protein operates within pyrimidine metabolism; UMP biosynthesis via de novo pathway; UMP from orotate: step 1/2. In terms of biological role, catalyzes the transfer of a ribosyl phosphate group from 5-phosphoribose 1-diphosphate to orotate, leading to the formation of orotidine monophosphate (OMP). This is Orotate phosphoribosyltransferase from Thiobacillus denitrificans (strain ATCC 25259 / T1).